Here is a 417-residue protein sequence, read N- to C-terminus: Serine--tRNA ligase (417 aa).

232-234 (TAE) lines the L-serine pocket. Residues 263-265 (RRE) and Val279 each bind ATP. Residue Glu286 coordinates L-serine. 350-353 (EISS) contributes to the ATP binding site. Position 385 (Ser385) interacts with L-serine.

It belongs to the class-II aminoacyl-tRNA synthetase family. Type-1 seryl-tRNA synthetase subfamily. As to quaternary structure, homodimer. The tRNA molecule binds across the dimer.

The protein resides in the cytoplasm. The catalysed reaction is tRNA(Ser) + L-serine + ATP = L-seryl-tRNA(Ser) + AMP + diphosphate + H(+). The enzyme catalyses tRNA(Sec) + L-serine + ATP = L-seryl-tRNA(Sec) + AMP + diphosphate + H(+). Its pathway is aminoacyl-tRNA biosynthesis; selenocysteinyl-tRNA(Sec) biosynthesis; L-seryl-tRNA(Sec) from L-serine and tRNA(Sec): step 1/1. In terms of biological role, catalyzes the attachment of serine to tRNA(Ser). Is also able to aminoacylate tRNA(Sec) with serine, to form the misacylated tRNA L-seryl-tRNA(Sec), which will be further converted into selenocysteinyl-tRNA(Sec). This Leptospira interrogans serogroup Icterohaemorrhagiae serovar copenhageni (strain Fiocruz L1-130) protein is Serine--tRNA ligase.